Reading from the N-terminus, the 49-residue chain is MGKRKANHIVPGMNAASAQGQGTGYNEEFANEPLTAAQRQNNKKRKKNQ.

Residues 1–49 are disordered; it reads MGKRKANHIVPGMNAASAQGQGTGYNEEFANEPLTAAQRQNNKKRKKNQ.

It belongs to the SspO family.

It localises to the spore core. The protein is Small, acid-soluble spore protein O of Bacillus cytotoxicus (strain DSM 22905 / CIP 110041 / 391-98 / NVH 391-98).